We begin with the raw amino-acid sequence, 41 residues long: Large ribosomal subunit protein bL36 (41 aa).

The protein belongs to the bacterial ribosomal protein bL36 family.

In Methylorubrum extorquens (strain CM4 / NCIMB 13688) (Methylobacterium extorquens), this protein is Large ribosomal subunit protein bL36.